The sequence spans 213 residues: tRNA (guanine-N(7)-)-methyltransferase (213 aa).

4 residues coordinate S-adenosyl-L-methionine: glutamate 44, glutamate 69, aspartate 96, and aspartate 118. Aspartate 118 is an active-site residue. Substrate contacts are provided by residues lysine 122, aspartate 154, and 191–194 (TEYE).

Belongs to the class I-like SAM-binding methyltransferase superfamily. TrmB family.

The enzyme catalyses guanosine(46) in tRNA + S-adenosyl-L-methionine = N(7)-methylguanosine(46) in tRNA + S-adenosyl-L-homocysteine. Its pathway is tRNA modification; N(7)-methylguanine-tRNA biosynthesis. Catalyzes the formation of N(7)-methylguanine at position 46 (m7G46) in tRNA. This is tRNA (guanine-N(7)-)-methyltransferase from Exiguobacterium sibiricum (strain DSM 17290 / CCUG 55495 / CIP 109462 / JCM 13490 / 255-15).